A 234-amino-acid chain; its full sequence is Large ribosomal subunit protein uL1 (234 aa).

The protein belongs to the universal ribosomal protein uL1 family. As to quaternary structure, part of the 50S ribosomal subunit.

In terms of biological role, binds directly to 23S rRNA. The L1 stalk is quite mobile in the ribosome, and is involved in E site tRNA release. Its function is as follows. Protein L1 is also a translational repressor protein, it controls the translation of the L11 operon by binding to its mRNA. The protein is Large ribosomal subunit protein uL1 of Prochlorococcus marinus (strain SARG / CCMP1375 / SS120).